The chain runs to 204 residues: ATP-dependent Clp protease proteolytic subunit (204 aa).

Ser100 (nucleophile) is an active-site residue. His125 is a catalytic residue.

This sequence belongs to the peptidase S14 family. Fourteen ClpP subunits assemble into 2 heptameric rings which stack back to back to give a disk-like structure with a central cavity, resembling the structure of eukaryotic proteasomes.

The protein resides in the cytoplasm. The enzyme catalyses Hydrolysis of proteins to small peptides in the presence of ATP and magnesium. alpha-casein is the usual test substrate. In the absence of ATP, only oligopeptides shorter than five residues are hydrolyzed (such as succinyl-Leu-Tyr-|-NHMec, and Leu-Tyr-Leu-|-Tyr-Trp, in which cleavage of the -Tyr-|-Leu- and -Tyr-|-Trp bonds also occurs).. Cleaves peptides in various proteins in a process that requires ATP hydrolysis. Has a chymotrypsin-like activity. Plays a major role in the degradation of misfolded proteins. The polypeptide is ATP-dependent Clp protease proteolytic subunit (Anaeromyxobacter sp. (strain Fw109-5)).